A 28-amino-acid polypeptide reads, in one-letter code: leu operon leader peptide (28 aa).

Functionally, involved in control of the biosynthesis of leucine. The sequence is that of leu operon leader peptide (leuL) from Salmonella typhi.